The following is a 138-amino-acid chain: Thyrotropin subunit beta (138 aa).

Residues 1–20 form the signal peptide; it reads MSAAVLLSVLFALACGQAAS. 6 cysteine pairs are disulfide-bonded: C22–C72, C36–C87, C39–C125, C47–C103, C51–C105, and C108–C115. N43 is a glycosylation site (N-linked (GlcNAc...) asparagine). Residues 133-138 constitute a propeptide that is removed on maturation; sequence LGGFSV.

It belongs to the glycoprotein hormones subunit beta family. In terms of assembly, heterodimer of a common alpha chain and a unique beta chain which confers biological specificity to thyrotropin, lutropin, follitropin and gonadotropin.

The protein resides in the secreted. Its function is as follows. Indispensable for the control of thyroid structure and metabolism. This chain is Thyrotropin subunit beta (Tshb), found in Mus musculus (Mouse).